We begin with the raw amino-acid sequence, 64 residues long: Large ribosomal subunit protein bL32 (64 aa).

A compositionally biased stretch (basic residues) spans 1-16 (MAVPKHRKSKAKKRSR). The disordered stretch occupies residues 1-22 (MAVPKHRKSKAKKRSRQAANDK).

This sequence belongs to the bacterial ribosomal protein bL32 family.

This is Large ribosomal subunit protein bL32 from Brachyspira hyodysenteriae (strain ATCC 49526 / WA1).